A 364-amino-acid chain; its full sequence is DNA replication and repair protein RecF (364 aa).

ATP is bound at residue 30–37; the sequence is GNNAQGKT.

Belongs to the RecF family.

It is found in the cytoplasm. In terms of biological role, the RecF protein is involved in DNA metabolism; it is required for DNA replication and normal SOS inducibility. RecF binds preferentially to single-stranded, linear DNA. It also seems to bind ATP. The protein is DNA replication and repair protein RecF of Clostridium botulinum (strain Langeland / NCTC 10281 / Type F).